The primary structure comprises 653 residues: Chaperone protein DnaK (653 aa).

Thr198 carries the post-translational modification Phosphothreonine; by autocatalysis. Residues 608–617 are compositionally biased toward low complexity; sequence DPEAAAHAAG. The disordered stretch occupies residues 608–653; that stretch reads DPEAAAHAAGMHGGAATGGGDGANKHGKGAEDVVEAEFEEVNDDKK. Gly residues predominate over residues 618 to 629; sequence MHGGAATGGGDG. The span at 639 to 653 shows a compositional bias: acidic residues; sequence DVVEAEFEEVNDDKK.

Belongs to the heat shock protein 70 family.

Functionally, acts as a chaperone. The chain is Chaperone protein DnaK from Magnetococcus marinus (strain ATCC BAA-1437 / JCM 17883 / MC-1).